The following is an 88-amino-acid chain: Kunitz-type U15-theraphotoxin-Hhn1e (88 aa).

The first 27 residues, M1 to A27, serve as a signal peptide directing secretion. Residues E28–R33 constitute a propeptide that is removed on maturation. Residues C37–C85 enclose the BPTI/Kunitz inhibitor domain. 2 disulfides stabilise this stretch: C37/C85 and C60/C81.

This sequence belongs to the venom Kunitz-type family. 03 (sub-Kunitz) subfamily. As to expression, expressed by the venom gland.

It localises to the secreted. Functionally, serine protease inhibitor that inhibits trypsin at a molar ratio of 1:1. The polypeptide is Kunitz-type U15-theraphotoxin-Hhn1e (Cyriopagopus hainanus (Chinese bird spider)).